Consider the following 341-residue polypeptide: HTH-type transcriptional repressor PurR (341 aa).

The HTH lacI-type domain maps to 2 to 56 (ATIKDVAKRANVSTTTVSHVINKTRFVAEETRNAVWAAIKELHYSPSAVARSLKV). Positions 4–23 (IKDVAKRANVSTTTVSHVIN) form a DNA-binding region, H-T-H motif. Residues 48–56 (SAVARSLKV) mediate DNA binding. The hypoxanthine site is built by tyrosine 73, arginine 190, threonine 192, phenylalanine 221, and aspartate 275.

As to quaternary structure, homodimer.

It functions in the pathway purine metabolism; purine nucleotide biosynthesis [regulation]. Is the main repressor of the genes involved in the de novo synthesis of purine nucleotides, regulating purB, purC, purEK, purF, purHD, purL, purMN and guaBA expression. PurR is allosterically activated to bind its cognate DNA by binding the purine corepressors, hypoxanthine or guanine, thereby effecting transcription repression. In Klebsiella pneumoniae (strain 342), this protein is HTH-type transcriptional repressor PurR.